Reading from the N-terminus, the 124-residue chain is Glycine cleavage system H protein (124 aa).

Residues 22 to 104 (LIVTGISDHA…YGKGWIYKMK (83 aa)) enclose the Lipoyl-binding domain. Lysine 63 bears the N6-lipoyllysine mark.

Belongs to the GcvH family. The glycine cleavage system is composed of four proteins: P, T, L and H. It depends on (R)-lipoate as a cofactor.

The glycine cleavage system catalyzes the degradation of glycine. The H protein shuttles the methylamine group of glycine from the P protein to the T protein. The chain is Glycine cleavage system H protein from Acinetobacter baylyi (strain ATCC 33305 / BD413 / ADP1).